Here is a 142-residue protein sequence, read N- to C-terminus: MQVIDLPLDRAGEALVAAWCRDRRLEVLAERWHCRWGELDLVTQEDSALRFIEVKTRRQTGWDQSGLLAIGPAKQRCLSRAAACYLASLGNQAAVACRFDVALVRYRSEPSAAAVKVAAWGQGYLELWCYLPDAFSAVESGW.

Belongs to the UPF0102 family.

The chain is UPF0102 protein Synpcc7942_0312 from Synechococcus elongatus (strain ATCC 33912 / PCC 7942 / FACHB-805) (Anacystis nidulans R2).